Reading from the N-terminus, the 247-residue chain is Carboxy-S-adenosyl-L-methionine synthase (247 aa).

Residues Tyr40, 65–67 (GSS), 90–91 (DN), 122–123 (DI), Asn137, and Arg204 contribute to the S-adenosyl-L-methionine site.

This sequence belongs to the class I-like SAM-binding methyltransferase superfamily. Cx-SAM synthase family. As to quaternary structure, homodimer.

It catalyses the reaction prephenate + S-adenosyl-L-methionine = carboxy-S-adenosyl-L-methionine + 3-phenylpyruvate + H2O. In terms of biological role, catalyzes the conversion of S-adenosyl-L-methionine (SAM) to carboxy-S-adenosyl-L-methionine (Cx-SAM). This is Carboxy-S-adenosyl-L-methionine synthase from Pseudomonas savastanoi pv. phaseolicola (strain 1448A / Race 6) (Pseudomonas syringae pv. phaseolicola (strain 1448A / Race 6)).